Consider the following 83-residue polypeptide: Small ribosomal subunit protein bS16 (83 aa).

The protein belongs to the bacterial ribosomal protein bS16 family.

This Shewanella baltica (strain OS223) protein is Small ribosomal subunit protein bS16.